Consider the following 371-residue polypeptide: Nuclear hormone receptor family member nhr-51 (371 aa).

The segment at residues 2 to 77 is a DNA-binding region (nuclear receptor); it reads NKNCLICHRK…MGMQAFPRRV (76 aa). 2 NR C4-type zinc fingers span residues 5–25 and 41–60; these read CLIC…CFAC and CQKF…CKAC. The NR LBD domain occupies 98–337; the sequence is MDEQRHWRML…KQLVTDTFVD (240 aa).

Belongs to the nuclear hormone receptor family.

The protein resides in the nucleus. In terms of biological role, orphan nuclear receptor. This chain is Nuclear hormone receptor family member nhr-51 (nhr-51), found in Caenorhabditis elegans.